The chain runs to 205 residues: Thymidine kinase (205 aa).

ATP is bound by residues 9-16 (SAMNAGKS) and 87-90 (DECQ). Residue Glu88 is the Proton acceptor of the active site. Residues Cys145, Cys147, Cys182, and His185 each contribute to the Zn(2+) site.

It belongs to the thymidine kinase family. As to quaternary structure, homotetramer.

It localises to the cytoplasm. The enzyme catalyses thymidine + ATP = dTMP + ADP + H(+). Allosteric enzyme which is feedback inhibited by dTTP and activated by a number of dNDP and dNTP. Its function is as follows. Phosphorylates both thymidine and deoxyuridine. The polypeptide is Thymidine kinase (Escherichia coli (strain K12)).